A 581-amino-acid chain; its full sequence is Sabinene synthase 1, chloroplastic (581 aa).

The transit peptide at Met-1–Leu-28 directs the protein to the chloroplast. (2E)-geranyl diphosphate contacts are provided by Arg-297, Asp-334, Asp-338, Arg-475, and Asp-478. Asp-334 and Asp-338 together coordinate Mg(2+). Residues Asp-334–Asp-338 carry the DDXXD motif motif. Mg(2+)-binding residues include Asp-478, Thr-482, and Glu-486.

This sequence belongs to the terpene synthase family. Tpsb subfamily. The cofactor is Mg(2+). Mn(2+) serves as cofactor.

It is found in the plastid. Its subcellular location is the chloroplast. The catalysed reaction is (2E)-geranyl diphosphate = sabinene + diphosphate. The enzyme catalyses (2E)-geranyl diphosphate = beta-myrcene + diphosphate. Its pathway is secondary metabolite biosynthesis; terpenoid biosynthesis. In terms of biological role, monoterpene synthase (TPS) involved in the biosynthesis of monoterpene natural products, components of the chemical defense arsenal. Catalyzes the conversion of (2E)-geranyl diphosphate (GPP) into sabinene, and, as minor products, myrcene. In Salvia pomifera (Apple sage), this protein is Sabinene synthase 1, chloroplastic.